The primary structure comprises 1413 residues: DNA-directed RNA polymerase subunit beta' (1413 aa).

4 residues coordinate Zn(2+): cysteine 72, cysteine 74, cysteine 87, and cysteine 90. 3 residues coordinate Mg(2+): aspartate 463, aspartate 465, and aspartate 467. Cysteine 811, cysteine 885, cysteine 892, and cysteine 895 together coordinate Zn(2+).

The protein belongs to the RNA polymerase beta' chain family. In terms of assembly, the RNAP catalytic core consists of 2 alpha, 1 beta, 1 beta' and 1 omega subunit. When a sigma factor is associated with the core the holoenzyme is formed, which can initiate transcription. Mg(2+) is required as a cofactor. Requires Zn(2+) as cofactor.

It carries out the reaction RNA(n) + a ribonucleoside 5'-triphosphate = RNA(n+1) + diphosphate. DNA-dependent RNA polymerase catalyzes the transcription of DNA into RNA using the four ribonucleoside triphosphates as substrates. This Ruegeria pomeroyi (strain ATCC 700808 / DSM 15171 / DSS-3) (Silicibacter pomeroyi) protein is DNA-directed RNA polymerase subunit beta'.